The chain runs to 994 residues: UPF0182 protein Strop_3729 (994 aa).

A run of 7 helical transmembrane segments spans residues 18-38 (IGVLVGVFVLFTLLGWGVQAW), 61-81 (LLLFVTVGLAMAVIVGGNLWL), 110-130 (IGLWFATVSVVVGLFAGLSAQ), 174-194 (FTAVVLALLGALAVHYVFGGI), 209-229 (AHLSTLVAVFVLLKAVAYVLD), 260-280 (ILAYISVVVAIAVLVFSNAWM), and 283-303 (LVWPGISLALLGVSAVAIGGI). 2 disordered regions span residues 891 to 934 (GEQA…AEAA) and 970 to 994 (FEQAAASTPAATPTAAPTGSPSPGG). Pro residues predominate over residues 897 to 926 (PSPPPSDDETPPSPTPTPTPTTPSVTPPPL).

It belongs to the UPF0182 family.

The protein localises to the cell membrane. This Salinispora tropica (strain ATCC BAA-916 / DSM 44818 / JCM 13857 / NBRC 105044 / CNB-440) protein is UPF0182 protein Strop_3729.